The following is a 202-amino-acid chain: 3-isopropylmalate dehydratase small subunit (202 aa).

The protein belongs to the LeuD family. LeuD type 1 subfamily. In terms of assembly, heterodimer of LeuC and LeuD.

It carries out the reaction (2R,3S)-3-isopropylmalate = (2S)-2-isopropylmalate. Its pathway is amino-acid biosynthesis; L-leucine biosynthesis; L-leucine from 3-methyl-2-oxobutanoate: step 2/4. Catalyzes the isomerization between 2-isopropylmalate and 3-isopropylmalate, via the formation of 2-isopropylmaleate. In Blochmanniella pennsylvanica (strain BPEN), this protein is 3-isopropylmalate dehydratase small subunit.